Here is a 442-residue protein sequence, read N- to C-terminus: Capsid vertex component 1 (442 aa).

It belongs to the herpesviridae CVC1 protein family. As to quaternary structure, interacts (via C-terminus) with capsid vertex component 2/CVC2.

It localises to the virion. It is found in the host nucleus. In terms of biological role, capsid vertex-specific component that plays a role during viral DNA encapsidation, assuring correct genome cleavage and presumably stabilizing capsids that contain full-length viral genomes. The polypeptide is Capsid vertex component 1 (Homo sapiens (Human)).